The sequence spans 547 residues: Undecaprenyl phosphate-alpha-4-amino-4-deoxy-L-arabinose arabinosyl transferase (547 aa).

The next 10 helical transmembrane spans lie at 83–103, 111–131, 174–194, 205–225, 253–273, 286–306, 311–331, 346–366, 378–398, and 408–428; these read FASAAATGLSALLIFWFALQL, FLASLIYLSLLIVYGIGTYSV, FLTKGFIALAVPVVVIVPYVI, FGPLAILSAVLLAAPWAIAVH, APFWYYLPMGLLGTLPWLGLL, ISPETLYLLAWVILPLLFFSI, LLTYILPCFAPLAMLMAANAV, AWLNGLFGLICLVVLAVLAFS, GALAVAMVIFAGWSLLGFIQL, and SALCPMVLAIGLPWALPQSLI.

The protein belongs to the glycosyltransferase 83 family.

Its subcellular location is the cell inner membrane. It carries out the reaction 4-amino-4-deoxy-alpha-L-arabinopyranosyl di-trans,octa-cis-undecaprenyl phosphate + lipid IVA = lipid IIA + di-trans,octa-cis-undecaprenyl phosphate.. It participates in lipopolysaccharide metabolism; 4-amino-4-deoxy-beta-L-arabinose-lipid A biosynthesis. In terms of biological role, catalyzes the transfer of the L-Ara4N moiety of the glycolipid undecaprenyl phosphate-alpha-L-Ara4N to lipid A. The modified arabinose is attached to lipid A and is required for resistance to polymyxin and cationic antimicrobial peptides. This is Undecaprenyl phosphate-alpha-4-amino-4-deoxy-L-arabinose arabinosyl transferase from Aeromonas hydrophila subsp. hydrophila (strain ATCC 7966 / DSM 30187 / BCRC 13018 / CCUG 14551 / JCM 1027 / KCTC 2358 / NCIMB 9240 / NCTC 8049).